The primary structure comprises 92 residues: Small ribosomal subunit protein uS19 (92 aa).

The protein belongs to the universal ribosomal protein uS19 family.

Functionally, protein S19 forms a complex with S13 that binds strongly to the 16S ribosomal RNA. This Leuconostoc mesenteroides subsp. mesenteroides (strain ATCC 8293 / DSM 20343 / BCRC 11652 / CCM 1803 / JCM 6124 / NCDO 523 / NBRC 100496 / NCIMB 8023 / NCTC 12954 / NRRL B-1118 / 37Y) protein is Small ribosomal subunit protein uS19.